We begin with the raw amino-acid sequence, 932 residues long: Protocadherin gamma-A9 (932 aa).

Residues 1–28 (MAAPTKCQLRGRLVLLCSLLGMLWEARA) form the signal peptide. Cadherin domains follow at residues 29 to 133 (SQIR…APKF), 134 to 242 (QAES…APVF), 243 to 347 (AQRI…RPEV), 348 to 452 (TITS…PPAF), 453 to 562 (SQAS…APEI), and 570 to 683 (DGST…IPAD). The Extracellular portion of the chain corresponds to 29-692 (SQIRYSVPEE…DLEASDLTLY (664 aa)). 2 N-linked (GlcNAc...) asparagine glycosylation sites follow: Asn47 and Asn127. Asn389, Asn419, and Asn545 each carry an N-linked (GlcNAc...) asparagine glycan. The helical transmembrane segment at 693–713 (LVVAVAVVSCVFLTFVITLLA) threads the bilayer. Residues 714–932 (LRLRHWHSSH…KKKSGKKEKK (219 aa)) lie on the Cytoplasmic side of the membrane. Disordered regions lie at residues 803 to 841 (DTPL…WPNN) and 902 to 932 (ATLT…KEKK). Residues 816–841 (WRFSQAQRPGTSGSQNGDDTGTWPNN) show a composition bias toward polar residues. The segment covering 922–932 (NKKKSGKKEKK) has biased composition (basic residues).

It localises to the cell membrane. Its function is as follows. Potential calcium-dependent cell-adhesion protein. May be involved in the establishment and maintenance of specific neuronal connections in the brain. The polypeptide is Protocadherin gamma-A9 (PCDHGA9) (Pan troglodytes (Chimpanzee)).